We begin with the raw amino-acid sequence, 551 residues long: MDDPSIASGFQQGTGRTTGANGTQIQREGLDGLLRQYPIQCIGTSLLVALLTTIIIYYSSSSSFPSATIKKTPPIPEINPLGGIFYPSKTKAAITAYLTNARGLVTDFFRQNPGKLAAQLHTQIGTIIVLASSTAEEIAHDERFHLRKQTAKTFNAHLPGFEVFRDDYNNHLMKNVVTKYFNKQLTKVTGILAHEMDLALGELFTTAKEGQQWTEIPLHATALQIVARLSGRVFLGEDLGRDPEWLRITAGYAGVVTMAFADLSKWPAWLRSTANRFLPRCKASREYMDGVRRKLRPVIAQRRKERRTSSREYREYNDAIEWFELESNGNAYDPEIVQLSLSLAAIHTAGDLLAQTLTEVATHCEIIEPLKEEMRGILAKGGWQKSSLDKMILLDSVIKESQRRKPLATLSMGRIAVTDAKLSDGTVVPKDSTVSIDAGLMWDPSIYAQPDEWDPYRFVRQRKGSLEKQRLAELTTTAPEHLAFGHGMHACPGRFFAANEVKIAMIKILLGYDIKFADGVEPKVMVHGITLDPDRRVRLSIWRREDGHGGF.

Residues 1–23 (MDDPSIASGFQQGTGRTTGANGT) are disordered. The span at 8–23 (SGFQQGTGRTTGANGT) shows a compositional bias: polar residues. N-linked (GlcNAc...) asparagine glycosylation occurs at Asn21. A helical membrane pass occupies residues 41 to 57 (CIGTSLLVALLTTIIIY). Cys491 serves as a coordination point for heme.

Belongs to the cytochrome P450 family. It depends on heme as a cofactor.

The protein localises to the membrane. Its pathway is antibiotic biosynthesis. In terms of biological role, cytochrome P450 monooxygenase; part of the gene cluster that mediates the biosynthesis of sordarin and hypoxysordarin, glycoside antibiotics with a unique tetracyclic diterpene aglycone structure. First, the geranylgeranyl diphosphate synthase sdnC constructs GGDP from farnesyl diphosphate and isopentenyl diphosphate. The diterpene cyclase sdnA then catalyzes the cyclization of GGDP to afford cycloaraneosene. Cycloaraneosene is then hydroxylated four times by the putative cytochrome P450 monooxygenases sdnB, sdnE, sdnF and sdnH to give a hydroxylated cycloaraneosene derivative such as cycloaraneosene-8,9,13,19-tetraol. Although the order of the hydroxylations is unclear, at least C8, C9 and C13 of the cycloaraneosene skeleton are hydroxylated before the sordaricin formation. Dehydration of the 13-hydroxy group of the hydroxylated cycloaraneosene derivative might be catalyzed by an unassigned hypothetical protein such as sdnG and sdnP to construct the cyclopentadiene moiety. The FAD-dependent oxidoreductase sdnN is proposed to catalyze the oxidation at C9 of the hydroxylated cycloaraneosene derivative and also catalyze the Baeyer-Villiger oxidation to give the lactone intermediate. The presumed lactone intermediate would be hydrolyzed to give an acrolein moiety and a carboxylate moiety. Then, [4+2]cycloaddition would occur between the acrolein moiety and the cyclopentadiene moiety to give sordaricin. SdnN might also be involved in the [4+2]cycloaddition after the hypothesized oxidation to accommodate the oxidized product and prompt the [4+2]cycloaddition. GDP-6-deoxy-D-altrose may be biosynthesized from GDP-D-mannose by the putative GDP-mannose-4,6-dehydratase sdnI and the short-chain dehydrogenase sdnK. The glycosyltransferase sdnJ catalyzes the attachment of 6-deoxy-D-altrose onto the 19-hydroxy group of sordaricin to give 4'-O-demethylsordarin. The methyltransferase sdnD would complete the biosynthesis of sordarin. Sordarin can be further modified into hypoxysordarin. The unique acyl chain at the 3'-hydroxy group of hypoxysordarin would be constructed by an iterative type I PKS sdnO and the trans-acting polyketide methyltransferase sdnL. SdnL would be responsible for the introduction of an alpha-methyl group of the polyketide chain. Alternatively, the beta-lactamase-like protein sdnR might be responsible for the cleavage and transfer of the polyketide chain from the PKS sdnO to sordarin. Two putative cytochrome P450 monooxygenases, sdnQ and sdnT, might catalyze the epoxidations of the polyketide chain to complete the biosynthesis of hypoxysordarin. Transcriptional regulators sdnM and sdnS are presumably encoded for the transcriptional regulation of the expression of the sdn gene cluster. This is Cytochrome P450 monooxygenase sdnQ from Sordaria araneosa (Pleurage araneosa).